The following is a 341-amino-acid chain: Phosphate acyltransferase (341 aa).

Belongs to the PlsX family. In terms of assembly, homodimer. Probably interacts with PlsY.

The protein resides in the cytoplasm. The enzyme catalyses a fatty acyl-[ACP] + phosphate = an acyl phosphate + holo-[ACP]. It participates in lipid metabolism; phospholipid metabolism. Its function is as follows. Catalyzes the reversible formation of acyl-phosphate (acyl-PO(4)) from acyl-[acyl-carrier-protein] (acyl-ACP). This enzyme utilizes acyl-ACP as fatty acyl donor, but not acyl-CoA. This Idiomarina loihiensis (strain ATCC BAA-735 / DSM 15497 / L2-TR) protein is Phosphate acyltransferase.